The primary structure comprises 422 residues: uncharacterized protein (422 aa).

It belongs to the asfivirus K421R family.

Its subcellular location is the virion. This is an uncharacterized protein from Ornithodoros (relapsing fever ticks).